The sequence spans 253 residues: Decarboxylase DEC1 (253 aa).

Lys121 acts as the Schiff-base intermediate with acetoacetate in catalysis.

The protein belongs to the ADC family.

Its pathway is mycotoxin biosynthesis. Its function is as follows. Decarboxylase; part of the Tox1B locus, one of the 2 loci that mediate the biosynthesis of T-toxin, a family of linear polyketides 37 to 45 carbons in length, of which the major component is 41 carbons, and which leads to high virulence to maize. One of the PKSs (PKS1 or PKS2) could synthesize a precursor, used subsequently by the other PKS as starter unit, to add additional carbons. Variability in the length of the final carbon backbone C35-47 could be achieved by varying the number of condensation cycles, or use of different starter or extender units or might be due to decarboxylation of the penultimate product, catalyzed by DEC1. Additional proteins are required for the biosynthesis of T-toxin, including oxidoreductases RED1, RED2, RED3, LAM1 and OXI1, as well as esterase TOX9. The polypeptide is Decarboxylase DEC1 (Cochliobolus heterostrophus (strain C4 / ATCC 48331 / race T) (Southern corn leaf blight fungus)).